Here is a 290-residue protein sequence, read N- to C-terminus: Oxaloacetate decarboxylase (290 aa).

Residue serine 53 participates in substrate binding. Position 91 (aspartate 91) interacts with Mg(2+). The substrate site is built by arginine 162 and histidine 238.

The protein belongs to the isocitrate lyase/PEP mutase superfamily. Oxaloacetate decarboxylase family. Homotetramer; dimer of dimers. It depends on Mg(2+) as a cofactor.

It carries out the reaction oxaloacetate + H(+) = pyruvate + CO2. Functionally, catalyzes the decarboxylation of oxaloacetate into pyruvate. Seems to play a role in maintaining cellular concentrations of bicarbonate and pyruvate. The chain is Oxaloacetate decarboxylase from Ectopseudomonas mendocina (strain ymp) (Pseudomonas mendocina).